Reading from the N-terminus, the 397-residue chain is Elongation factor Tu (397 aa).

One can recognise a tr-type G domain in the interval 10 to 207 (KPHVNVGTIG…ACDSYIPDPQ (198 aa)). Positions 19–26 (GHIDHGKT) are G1. 19 to 26 (GHIDHGKT) serves as a coordination point for GTP. Thr-26 provides a ligand contact to Mg(2+). A G2 region spans residues 60 to 64 (GITIA). The interval 81-84 (DCPG) is G3. Residues 81-85 (DCPGH) and 136-139 (NKCD) contribute to the GTP site. A G4 region spans residues 136 to 139 (NKCD). Positions 174-176 (SAL) are G5.

The protein belongs to the TRAFAC class translation factor GTPase superfamily. Classic translation factor GTPase family. EF-Tu/EF-1A subfamily. Monomer.

The protein localises to the cytoplasm. The enzyme catalyses GTP + H2O = GDP + phosphate + H(+). Its function is as follows. GTP hydrolase that promotes the GTP-dependent binding of aminoacyl-tRNA to the A-site of ribosomes during protein biosynthesis. The sequence is that of Elongation factor Tu from Lawsonia intracellularis (strain PHE/MN1-00).